We begin with the raw amino-acid sequence, 566 residues long: Glucose-6-phosphate isomerase, cytosolic (566 aa).

The active-site Proton donor is Glu360. Active-site residues include His391 and Lys516.

Belongs to the GPI family. In terms of assembly, homodimer.

It is found in the cytoplasm. It catalyses the reaction alpha-D-glucose 6-phosphate = beta-D-fructose 6-phosphate. The protein operates within carbohydrate degradation; glycolysis; D-glyceraldehyde 3-phosphate and glycerone phosphate from D-glucose: step 2/4. The chain is Glucose-6-phosphate isomerase, cytosolic (PGIC) from Spinacia oleracea (Spinach).